A 184-amino-acid chain; its full sequence is Large ribosomal subunit protein uL5 (184 aa).

This sequence belongs to the universal ribosomal protein uL5 family. Component of the large ribosomal subunit. Interacts with Fmr1 to form the RNA-induced silencing complex (RISC), a ribonucleoprotein (RNP) complex involved in translation regulation, other components of the complex are RpL5, Rm62, AGO2 and Dcr-1.

Its subcellular location is the nucleus. The protein resides in the cytoplasm. Functionally, component of the ribosome, a large ribonucleoprotein complex responsible for the synthesis of proteins in the cell. The small ribosomal subunit (SSU) binds messenger RNAs (mRNAs) and translates the encoded message by selecting cognate aminoacyl-transfer RNA (tRNA) molecules. The large subunit (LSU) contains the ribosomal catalytic site termed the peptidyl transferase center (PTC), which catalyzes the formation of peptide bonds, thereby polymerizing the amino acids delivered by tRNAs into a polypeptide chain. The nascent polypeptides leave the ribosome through a tunnel in the LSU and interact with protein factors that function in enzymatic processing, targeting, and the membrane insertion of nascent chains at the exit of the ribosomal tunnel. The protein is Large ribosomal subunit protein uL5 (RpL11) of Drosophila melanogaster (Fruit fly).